The primary structure comprises 673 residues: Protein kinase C delta type (673 aa).

Residues 1–106 enclose the C2 domain; that stretch reads MAPFLRISFN…KNNGKAEFWL (106 aa). Phosphothreonine occurs at positions 43 and 50. Tyrosine 64 is subject to Phosphotyrosine. Serine 130 is subject to Phosphoserine. Threonine 141 bears the Phosphothreonine mark. Tyrosine 155 is subject to Phosphotyrosine. A Phorbol-ester/DAG-type 1 zinc finger spans residues 158 to 208; sequence NHEFIATFFGQPTFCSVCKEFVWGLNKQGYKCRQCNAAIHKKCIDKIIGRC. Residue threonine 218 is modified to Phosphothreonine. A Phorbol-ester/DAG-type 2 zinc finger spans residues 230 to 280; sequence PHRFKVYNYMSPTFCDHCGTLLWGLVKQGLKCEDCGMNVHHKCREKVANLC. The residue at position 299 (serine 299) is a Phosphoserine; by autocatalysis. Phosphotyrosine; by SRC is present on residues tyrosine 311 and tyrosine 332. Residues 347–601 enclose the Protein kinase domain; sequence FTFQKVLGKG…TGNIRLHPFF (255 aa). Position 353–361 (353–361) interacts with ATP; it reads LGKGSFGKV. Residue tyrosine 372 is modified to Phosphotyrosine. Residue lysine 376 participates in ATP binding. At threonine 449 the chain carries Phosphothreonine. Aspartate 471 serves as the catalytic Proton acceptor. Serine 504 bears the Phosphoserine mark. Threonine 505 bears the Phosphothreonine; by autocatalysis mark. The residue at position 565 (tyrosine 565) is a Phosphotyrosine. In terms of domain architecture, AGC-kinase C-terminal spans 602–673; that stretch reads KTINWNLLEK…VNPKYEQFLE (72 aa). Phosphoserine occurs at positions 643, 652, and 662.

This sequence belongs to the protein kinase superfamily. AGC Ser/Thr protein kinase family. PKC subfamily. In terms of assembly, interacts with PDPK1 (via N-terminal region). Interacts with RAD9A. Interacts with CDCP1. Interacts with MUC1. Interacts with VASP. Interacts with CAVIN3. Interacts with PRKD2 (via N-terminus and zing-finger domain 1 and 2) in response to oxidative stress; the interaction is independent of PRKD2 tyrosine phosphorylation. Interacts with PLSC3; interaction is enhanced by UV irradiation. In terms of processing, autophosphorylated and/or phosphorylated at Thr-505, within the activation loop; phosphorylation at Thr-505 is not a prerequisite for enzymatic activity. Autophosphorylated at Ser-299. Upon TNFSF10/TRAIL treatment, phosphorylated at Tyr-155; phosphorylation is required for its translocation to the endoplasmic reticulum and cleavage by caspase-3. Phosphorylated at Tyr-311, Tyr-332 and Tyr-565; phosphorylation of Tyr-311 and Tyr-565 following thrombin or zymosan stimulation potentiates its kinase activity. Phosphorylated by protein kinase PDPK1; phosphorylation is inhibited by the apoptotic C-terminal cleavage product of PKN2. Phosphorylated at Tyr-311 and Tyr-332 by SRC; phosphorylation leads to enhanced autophosphorylation at Thr-505. Phosphorylated at Tyr-311 through a SYK and SRC mechanism downstream of C-type lectin receptors activation, promoting its activation. Post-translationally, proteolytically cleaved into a catalytic subunit and a regulatory subunit by caspase-3 during apoptosis which results in kinase activation.

Its subcellular location is the cytoplasm. It is found in the nucleus. The protein localises to the perinuclear region. It localises to the cell membrane. The protein resides in the mitochondrion. Its subcellular location is the endomembrane system. It catalyses the reaction L-seryl-[protein] + ATP = O-phospho-L-seryl-[protein] + ADP + H(+). The catalysed reaction is L-threonyl-[protein] + ATP = O-phospho-L-threonyl-[protein] + ADP + H(+). The enzyme catalyses L-tyrosyl-[protein] + ATP = O-phospho-L-tyrosyl-[protein] + ADP + H(+). Its activity is regulated as follows. Novel PKCs (PRKCD, PRKCE, PRKCH and PRKCQ) are calcium-insensitive, but activated by diacylglycerol (DAG) and phosphatidylserine. Three specific sites; Thr-505 (activation loop of the kinase domain), Ser-643 (turn motif) and Ser-662 (hydrophobic region), need to be phosphorylated for its full activation. Activated by caspase-3 (CASP3) cleavage during apoptosis. After cleavage, the pseudosubstrate motif in the regulatory subunit is released from the substrate recognition site of the catalytic subunit, which enables PRKCD to become constitutively activated. The catalytic subunit which displays properties of a sphingosine-dependent protein kinase is activated by D-erythro-sphingosine (Sph) or N,N-dimethyl-D-erythrosphingosine (DMS) or N,N,N-trimethyl-D-erythrosphingosine (TMS), but not by ceramide or Sph-1-P and is strongly inhibited by phosphatidylserine. Its function is as follows. Calcium-independent, phospholipid- and diacylglycerol (DAG)-dependent serine/threonine-protein kinase that plays contrasting roles in cell death and cell survival by functioning as a pro-apoptotic protein during DNA damage-induced apoptosis, but acting as an anti-apoptotic protein during cytokine receptor-initiated cell death, is involved in tumor suppression, is required for oxygen radical production by NADPH oxidase and acts as a positive or negative regulator in platelet functional responses. Upon DNA damage, activates the promoter of the death-promoting transcription factor BCLAF1/Btf to trigger BCLAF1-mediated p53/TP53 gene transcription and apoptosis. In response to oxidative stress, interact with and activate CHUK/IKKA in the nucleus, causing the phosphorylation of p53/TP53. In the case of ER stress or DNA damage-induced apoptosis, can form a complex with the tyrosine-protein kinase ABL1 which trigger apoptosis independently of p53/TP53. In cytosol can trigger apoptosis by activating MAPK11 or MAPK14, inhibiting AKT1 and decreasing the level of X-linked inhibitor of apoptosis protein (XIAP), whereas in nucleus induces apoptosis via the activation of MAPK8 or MAPK9. Upon ionizing radiation treatment, is required for the activation of the apoptosis regulators BAX and BAK, which trigger the mitochondrial cell death pathway. Can phosphorylate MCL1 and target it for degradation which is sufficient to trigger for BAX activation and apoptosis. Is required for the control of cell cycle progression both at G1/S and G2/M phases. Mediates phorbol 12-myristate 13-acetate (PMA)-induced inhibition of cell cycle progression at G1/S phase by up-regulating the CDK inhibitor CDKN1A/p21 and inhibiting the cyclin CCNA2 promoter activity. In response to UV irradiation can phosphorylate CDK1, which is important for the G2/M DNA damage checkpoint activation. Can protect glioma cells from the apoptosis induced by TNFSF10/TRAIL, probably by inducing increased phosphorylation and subsequent activation of AKT1. Can also act as tumor suppressor upon mitogenic stimulation with PMA or TPA. In N-formyl-methionyl-leucyl-phenylalanine (fMLP)-treated cells, is required for NCF1 (p47-phox) phosphorylation and activation of NADPH oxidase activity, and regulates TNF-elicited superoxide anion production in neutrophils, by direct phosphorylation and activation of NCF1 or indirectly through MAPK1/3 (ERK1/2) signaling pathways. Involved in antifungal immunity by mediating phosphorylation and activation of CARD9 downstream of C-type lectin receptors activation, promoting interaction between CARD9 and BCL10, followed by activation of NF-kappa-B and MAP kinase p38 pathways. May also play a role in the regulation of NADPH oxidase activity in eosinophil after stimulation with IL5, leukotriene B4 or PMA. In collagen-induced platelet aggregation, acts a negative regulator of filopodia formation and actin polymerization by interacting with and negatively regulating VASP phosphorylation. Downstream of PAR1, PAR4 and CD36/GP4 receptors, regulates differentially platelet dense granule secretion; acts as a positive regulator in PAR-mediated granule secretion, whereas it negatively regulates CD36/GP4-mediated granule release. Phosphorylates MUC1 in the C-terminal and regulates the interaction between MUC1 and beta-catenin. The catalytic subunit phosphorylates 14-3-3 proteins (YWHAB, YWHAZ and YWHAH) in a sphingosine-dependent fashion. Phosphorylates ELAVL1 in response to angiotensin-2 treatment. Phosphorylates mitochondrial phospholipid scramblase 3 (PLSCR3), resulting in increased cardiolipin expression on the mitochondrial outer membrane which facilitates apoptosis. Phosphorylates SMPD1 which induces SMPD1 secretion. In terms of biological role, truncated isoform 2 is inactive. This Rattus norvegicus (Rat) protein is Protein kinase C delta type.